The sequence spans 272 residues: Adenylate kinase (272 aa).

55–60 (GAGKGT) is a binding site for ATP. Residues 75–104 (ATGDMLRSQVAKKTPLGKEAKKIMDQGGLV) form an NMP region. AMP-binding positions include threonine 76, arginine 81, 102–104 (GLV), 131–134 (GFPR), and glutamine 138. An LID region spans residues 172–209 (GRLVHPASGRSYHKIFNPPKQDMKDDITGEPLIQRSDD). ATP is bound by residues arginine 173 and 182-183 (SY). Residues arginine 206 and arginine 217 each coordinate AMP. Glutamine 245 serves as a coordination point for ATP.

Belongs to the adenylate kinase family. AK2 subfamily. In terms of assembly, monomer.

The protein localises to the cytoplasm. The protein resides in the cytosol. It is found in the mitochondrion intermembrane space. It carries out the reaction AMP + ATP = 2 ADP. Its function is as follows. Catalyzes the reversible transfer of the terminal phosphate group between ATP and AMP. Plays an important role in cellular energy homeostasis and in adenine nucleotide metabolism. Adenylate kinase activity is critical for regulation of the phosphate utilization and the AMP de novo biosynthesis pathways. In Talaromyces marneffei (Penicillium marneffei), this protein is Adenylate kinase (adk1).